The chain runs to 78 residues: uncharacterized protein (78 aa).

This is an uncharacterized protein from Ureaplasma parvum serovar 3 (strain ATCC 700970).